Here is a 79-residue protein sequence, read N- to C-terminus: Conotoxin Cl9.4 (79 aa).

Positions 1-23 (MNCYLILTVALLLTSAMTGTTTA) are cleaved as a signal peptide. The propeptide occupies 24–37 (GQLNKKGVTLREDD). 3 disulfide bridges follow: C41–C58, C46–C68, and C48–C73.

As to expression, expressed by the venom duct.

The protein resides in the secreted. In Californiconus californicus (California cone), this protein is Conotoxin Cl9.4.